Consider the following 406-residue polypeptide: MNETPKPNSFRSGPDEDGRFGIYGGRFVAETLMPLILDLQDEWNKAKNDPAFQAELKHLGAHYIGRPSPLYFAERLTAELGGAKIYFKREELNHTGSHKINNCIGQILLAKRMGKTRIIAETGAGQHGVASATVAARFGLPCVVYMGATDVERQAPNVFRMKLLGAEVKPVTAGSGTLKDAMNEALRDWVTNVEDTYYLIGTAAGPHPYPEMVRDFQSVIGTEAKEQMLAAEGRLPDLVIAAVGGGSNAIGIFHPFLDDPTVKIVGVEAGGKGLQGDEHCASITAGSPGVLHGNRTYLLQDGDGQIKEGHSISAGLDYPGIGPEHSWLNDTGRVDYVPIMDHEALEAFQTLTRLEGIIPALEPSHAIAEVIKRAPKMGKDEIILMNLSGRGDKDIFTVGKILGMGL.

K99 is modified (N6-(pyridoxal phosphate)lysine).

The protein belongs to the TrpB family. Tetramer of two alpha and two beta chains. Requires pyridoxal 5'-phosphate as cofactor.

It carries out the reaction (1S,2R)-1-C-(indol-3-yl)glycerol 3-phosphate + L-serine = D-glyceraldehyde 3-phosphate + L-tryptophan + H2O. Its pathway is amino-acid biosynthesis; L-tryptophan biosynthesis; L-tryptophan from chorismate: step 5/5. In terms of biological role, the beta subunit is responsible for the synthesis of L-tryptophan from indole and L-serine. In Rhizobium leguminosarum bv. trifolii (strain WSM2304), this protein is Tryptophan synthase beta chain.